The chain runs to 919 residues: Probable dipeptidyl-aminopeptidase B (919 aa).

The segment at 1-89 (MGANSRVNDD…DGYVPSGGKP (89 aa)) is disordered. Residues 1 to 95 (MGANSRVNDD…GGKPAQRRTR (95 aa)) lie on the Cytoplasmic side of the membrane. Residues 27–38 (DSSSTASISLTL) show a composition bias toward low complexity. Residues 44–55 (HTATEPSKSTNG) show a composition bias toward polar residues. The chain crosses the membrane as a helical; Signal-anchor for type II membrane protein span at residues 96–116 (IVFWLLVALCVGGWAMAFIIM). Over 117–919 (ATSPNNRHST…RVIRRLLHFG (803 aa)) the chain is Vacuolar. Positions 121–150 (NNRHSTSDSSSGGSESEIVKPNTPHDGKKI) are disordered. A compositionally biased stretch (low complexity) spans 127–136 (SDSSSGGSES). Asn207, Asn303, Asn355, Asn577, and Asn665 each carry an N-linked (GlcNAc...) asparagine glycan. Ser760 (charge relay system) is an active-site residue. Asn814 and Asn819 each carry an N-linked (GlcNAc...) asparagine glycan. Active-site charge relay system residues include Asp837 and His870.

Belongs to the peptidase S9B family.

Its subcellular location is the vacuole membrane. The enzyme catalyses Release of an N-terminal dipeptide, Xaa-Yaa-|-Zaa-, from a polypeptide, preferentially when Yaa is Pro, provided Zaa is neither Pro nor hydroxyproline.. In terms of biological role, type IV dipeptidyl-peptidase which removes N-terminal dipeptides sequentially from polypeptides having unsubstituted N-termini provided that the penultimate residue is proline. The chain is Probable dipeptidyl-aminopeptidase B (DAPB) from Arthroderma otae (strain ATCC MYA-4605 / CBS 113480) (Microsporum canis).